Here is a 257-residue protein sequence, read N- to C-terminus: General L-amino acid transport ATP-binding protein AapP (257 aa).

Residues 18 to 252 (VEIVNMNKWY…PQHERTKLFL (235 aa)) form the ABC transporter domain. An ATP-binding site is contributed by 50–57 (GPSGSGKS).

It belongs to the ABC transporter superfamily.

Its function is as follows. Part of a binding-protein-dependent transport system for L-amino acids, affects the uptake as well as the efflux of these amino acids. Probably responsible for energy coupling to the transport system. This Rhizobium johnstonii (strain DSM 114642 / LMG 32736 / 3841) (Rhizobium leguminosarum bv. viciae) protein is General L-amino acid transport ATP-binding protein AapP (aapP).